Here is a 36-residue protein sequence, read N- to C-terminus: Pancreatic polypeptide (36 aa).

Phenylalanine amide is present on phenylalanine 36.

Belongs to the NPY family.

The protein localises to the secreted. In terms of biological role, hormone secreted by pancreatic cells that acts as a regulator of pancreatic and gastrointestinal functions. The sequence is that of Pancreatic polypeptide (ppy) from Aquarana catesbeiana (American bullfrog).